The sequence spans 469 residues: GTPase Der (469 aa).

2 consecutive EngA-type G domains span residues 3-167 and 176-349; these read PTLV…PEEE and PKIA…AAAF. GTP contacts are provided by residues 9–16, 56–60, 119–122, 182–189, 229–233, and 294–297; these read GRPNVGKS, DTGGL, NKAE, DTAGV, and NKWD. A KH-like domain is found at 350-436; that stretch reads IKLSTPKLTR…RIQIKEDEGK (87 aa). Basic and acidic residues predominate over residues 432 to 443; sequence EDEGKNPFEGKK. A disordered region spans residues 432–469; it reads EDEGKNPFEGKKRAPLSESEATRMRRKKRVRRKVYGAD. The span at 455-469 shows a compositional bias: basic residues; sequence MRRKKRVRRKVYGAD.

Belongs to the TRAFAC class TrmE-Era-EngA-EngB-Septin-like GTPase superfamily. EngA (Der) GTPase family. Associates with the 50S ribosomal subunit.

Its function is as follows. GTPase that plays an essential role in the late steps of ribosome biogenesis. This Thiobacillus denitrificans (strain ATCC 25259 / T1) protein is GTPase Der.